The primary structure comprises 95 residues: Aspartyl/glutamyl-tRNA(Asn/Gln) amidotransferase subunit C (95 aa).

The protein belongs to the GatC family. In terms of assembly, heterotrimer of A, B and C subunits.

The enzyme catalyses L-glutamyl-tRNA(Gln) + L-glutamine + ATP + H2O = L-glutaminyl-tRNA(Gln) + L-glutamate + ADP + phosphate + H(+). It catalyses the reaction L-aspartyl-tRNA(Asn) + L-glutamine + ATP + H2O = L-asparaginyl-tRNA(Asn) + L-glutamate + ADP + phosphate + 2 H(+). Functionally, allows the formation of correctly charged Asn-tRNA(Asn) or Gln-tRNA(Gln) through the transamidation of misacylated Asp-tRNA(Asn) or Glu-tRNA(Gln) in organisms which lack either or both of asparaginyl-tRNA or glutaminyl-tRNA synthetases. The reaction takes place in the presence of glutamine and ATP through an activated phospho-Asp-tRNA(Asn) or phospho-Glu-tRNA(Gln). The protein is Aspartyl/glutamyl-tRNA(Asn/Gln) amidotransferase subunit C of Bartonella quintana (strain Toulouse) (Rochalimaea quintana).